The sequence spans 558 residues: Arginine--tRNA ligase (558 aa).

The 'HIGH' region signature appears at P119–H129.

Belongs to the class-I aminoacyl-tRNA synthetase family. As to quaternary structure, monomer.

The protein localises to the cytoplasm. The enzyme catalyses tRNA(Arg) + L-arginine + ATP = L-arginyl-tRNA(Arg) + AMP + diphosphate. This chain is Arginine--tRNA ligase, found in Lactobacillus johnsonii (strain CNCM I-12250 / La1 / NCC 533).